Consider the following 188-residue polypeptide: dCTP deaminase (188 aa).

DCTP-binding positions include 111 to 116, 135 to 137, glutamine 156, tyrosine 170, and glutamine 180; these read KSTYAR and TLE. Glutamate 137 (proton donor/acceptor) is an active-site residue.

This sequence belongs to the dCTP deaminase family. Homotrimer.

It catalyses the reaction dCTP + H2O + H(+) = dUTP + NH4(+). Its pathway is pyrimidine metabolism; dUMP biosynthesis; dUMP from dCTP (dUTP route): step 1/2. Its function is as follows. Catalyzes the deamination of dCTP to dUTP. This chain is dCTP deaminase, found in Cupriavidus pinatubonensis (strain JMP 134 / LMG 1197) (Cupriavidus necator (strain JMP 134)).